The sequence spans 513 residues: Sodium/potassium/calcium exchanger 5 (513 aa).

The signal sequence occupies residues 1–35; that stretch reads MRTDVFLQRRKRRDVLLSIIALLLLIFAIVHLVFC. Residues 36–78 are Extracellular-facing; that stretch reads AGLSFQGSSSARVRRDLENASECVQPQSSEFPEGFFTVQERKD. The helical transmembrane segment at 79–99 threads the bilayer; the sequence is GGILIYFMIIFYMLLSVSIVC. Residues 100 to 123 are Cytoplasmic-facing; it reads DEYFLPSLEVISERLGLSQDVAGA. A helical membrane pass occupies residues 124–144; it reads TFMAAGSSAPELVTAFLGVFV. Over 145–148 the chain is Extracellular; sequence TKGD. A helical transmembrane segment spans residues 149–169; the sequence is IGVSTIMGSAVYNLLCICAAC. The Cytoplasmic portion of the chain corresponds to 170 to 181; the sequence is GLLSSAVGRLSC. A helical transmembrane segment spans residues 182–202; it reads WPLFRDCVAYAISVAAVIAII. At 203 to 207 the chain is on the extracellular side; sequence SDNRV. The chain crosses the membrane as a helical span at residues 208–228; that stretch reads YWYDGACLLLVYGVYVAVLCF. Topologically, residues 229–315 are cytoplasmic; sequence DLRISEYVMQ…KSVFSMPDHD (87 aa). Residues 316 to 336 traverse the membrane as a helical segment; that stretch reads LKRILWVLSLPVSTLLFVSVP. At 337-350 the chain is on the extracellular side; sequence DCRRPFWKNFYMLT. Residues 351–371 traverse the membrane as a helical segment; sequence FLMSAVWISAFTYVLVWMVTI. The Cytoplasmic segment spans residues 372–381; that stretch reads VGETLGIPDT. The chain crosses the membrane as a helical span at residues 382–402; sequence VMGMTLLAAGTSIPDTVASVM. Residues 403-420 are Extracellular-facing; that stretch reads VAREGKSDMAMSNIVGSN. Residues 421 to 441 form a helical membrane-spanning segment; that stretch reads VFDMLCLGLPWFIQTVFVDVG. Topologically, residues 442–450 are cytoplasmic; the sequence is SPVEVNSSG. Residues 451–471 traverse the membrane as a helical segment; that stretch reads LVFMSCTLLLSIIFLFLAVHI. Over 472–482 the chain is Extracellular; that stretch reads NGWKLDWKLGL. Residues 483–503 traverse the membrane as a helical segment; it reads VCLACYILFATLSILYELGII. Over 504 to 513 the chain is Cytoplasmic; it reads GNNPIRSCSD.

The protein belongs to the Ca(2+):cation antiporter (CaCA) (TC 2.A.19) family. SLC24A subfamily. As to expression, highly expressed in melanin-producing cells. Colocalizes with melanin biosynthesis marker dct.

It localises to the golgi apparatus. It is found in the trans-Golgi network membrane. The protein localises to the melanosome. It catalyses the reaction Ca(2+)(out) + K(+)(out) + 4 Na(+)(in) = Ca(2+)(in) + K(+)(in) + 4 Na(+)(out). Its function is as follows. Calcium, potassium:sodium antiporter that transports 1 Ca(2+) and 1 K(+) to the melanosome in exchange for 4 cytoplasmic Na(+). Involved in pigmentation, possibly by participating in ion transport in melanosomes. Predominant sodium-calcium exchanger in melanocytes. The sequence is that of Sodium/potassium/calcium exchanger 5 (slc24a5) from Danio rerio (Zebrafish).